Here is a 390-residue protein sequence, read N- to C-terminus: Methionyl-tRNA formyltransferase, mitochondrial (390 aa).

A mitochondrion-targeting transit peptide spans 1–33; sequence MRVLLRCCCGHLPVGGGAGRRSNPRWRALARLS.

The protein belongs to the Fmt family.

The protein resides in the mitochondrion. It carries out the reaction L-methionyl-tRNA(fMet) + (6R)-10-formyltetrahydrofolate = N-formyl-L-methionyl-tRNA(fMet) + (6S)-5,6,7,8-tetrahydrofolate + H(+). In terms of biological role, methionyl-tRNA formyltransferase that formylates methionyl-tRNA in mitochondria and is crucial for translation initiation. The protein is Methionyl-tRNA formyltransferase, mitochondrial (MTFMT) of Bos taurus (Bovine).